The primary structure comprises 165 residues: Nucleotide-binding protein PMN2A_1813 (165 aa).

The protein belongs to the YajQ family.

Nucleotide-binding protein. The protein is Nucleotide-binding protein PMN2A_1813 of Prochlorococcus marinus (strain NATL2A).